We begin with the raw amino-acid sequence, 892 residues long: Nitrogen assimilation transcription factor nirA (892 aa).

Positions 1 to 32 are disordered; that stretch reads MGEKLDPELSSDGPHTKSSSKGQGTSTDNAPA. Over residues 16-27 the composition is skewed to low complexity; sequence TKSSSKGQGTST. The segment at residues 42 to 70 is a DNA-binding region (zn(2)-C6 fungal-type); the sequence is CIACRRRKSKCDGNLPSCAACSSVYHTTC. 3 disordered regions span residues 646 to 714, 731 to 761, and 842 to 892; these read GPWD…SGPV, AHNEARQPEPTYLRPVSTSYGPVPSTQSAQE, and PNIP…SFQR. Residues 649–674 show a composition bias toward low complexity; sequence DQAASPSTTSDSPPSVSSQSVVATTD. 3 stretches are compositionally biased toward polar residues: residues 675–714, 746–761, and 876–892; these read LSQPVSQSAGNQPANPSMGTSPNLTQPVASQYSSTPSGPV, VSTSYGPVPSTQSAQE, and NVNSNQTNMIFPGSFQR.

It localises to the nucleus. In terms of biological role, pathway-specific regulatory gene of nitrate assimilation; it activates the transcription of the genes for nitrate and nitrite reductases (niaD and niiA). In Emericella nidulans (strain FGSC A4 / ATCC 38163 / CBS 112.46 / NRRL 194 / M139) (Aspergillus nidulans), this protein is Nitrogen assimilation transcription factor nirA (nirA).